A 46-amino-acid polypeptide reads, in one-letter code: uncharacterized protein (46 aa).

The segment at 1–46 is disordered; that stretch reads MNFGIKPDVSSGPRKGGPFKELSDFSKTSPTPQQPRSLSGKSVMLP. The segment covering 25–40 has biased composition (polar residues); that stretch reads FSKTSPTPQQPRSLSG.

This is an uncharacterized protein from Dictyostelium discoideum (Social amoeba).